An 89-amino-acid chain; its full sequence is MSPVNESLIDFPCDFPIKVMGKSHPDFQTTIVEVIRQFDGGFDAERVEVRPSSGGNYTGLTVTVRALNREHLDDIYRALTGHPMVKVVL.

The protein belongs to the UPF0250 family.

The polypeptide is UPF0250 protein Bphy_0213 (Paraburkholderia phymatum (strain DSM 17167 / CIP 108236 / LMG 21445 / STM815) (Burkholderia phymatum)).